A 319-amino-acid chain; its full sequence is ATP-dependent 6-phosphofructokinase (319 aa).

Gly11 provides a ligand contact to ATP. Residue 21 to 25 (RAVVR) coordinates ADP. ATP is bound by residues 72–73 (RC) and 102–105 (GDGS). Asp103 provides a ligand contact to Mg(2+). 125–127 (TID) is a binding site for substrate. Asp127 serves as the catalytic Proton acceptor. Residue Arg154 participates in ADP binding. Substrate is bound by residues Arg162 and 169-171 (MGR). ADP is bound by residues 185 to 187 (GAE), Arg211, and 213 to 215 (KKH). Substrate-binding positions include Glu222, Arg243, and 249–252 (HVQR).

Belongs to the phosphofructokinase type A (PFKA) family. ATP-dependent PFK group I subfamily. Prokaryotic clade 'B1' sub-subfamily. In terms of assembly, homotetramer. Mg(2+) is required as a cofactor.

The protein localises to the cytoplasm. The enzyme catalyses beta-D-fructose 6-phosphate + ATP = beta-D-fructose 1,6-bisphosphate + ADP + H(+). The protein operates within carbohydrate degradation; glycolysis; D-glyceraldehyde 3-phosphate and glycerone phosphate from D-glucose: step 3/4. With respect to regulation, allosterically activated by ADP and other diphosphonucleosides, and allosterically inhibited by phosphoenolpyruvate. In terms of biological role, catalyzes the phosphorylation of D-fructose 6-phosphate to fructose 1,6-bisphosphate by ATP, the first committing step of glycolysis. This chain is ATP-dependent 6-phosphofructokinase, found in Bacillus anthracis (strain A0248).